Consider the following 309-residue polypeptide: L-aminoadipate-semialdehyde dehydrogenase-phosphopantetheinyl transferase (309 aa).

CoA contacts are provided by residues Arg47, 86–91 (RTAKGK), and 108–111 (NISH). Residues Asp129 and Glu181 each contribute to the Mg(2+) site. 181-185 (ESFIK) is a CoA binding site. Ser258 is subject to Phosphoserine.

The protein belongs to the P-Pant transferase superfamily. AcpS family. Monomer. The cofactor is Mg(2+).

The protein resides in the cytoplasm. It is found in the cytosol. The enzyme catalyses apo-[ACP] + CoA = holo-[ACP] + adenosine 3',5'-bisphosphate + H(+). The catalysed reaction is apo-[ACP] + acetyl-CoA = acetyl-[ACP] + adenosine 3',5'-bisphosphate + H(+). In terms of biological role, catalyzes the post-translational modification of target proteins by phosphopantetheine. Can transfer the 4'-phosphopantetheine moiety from coenzyme A, regardless of whether the CoA is presented in the free thiol form or as an acetyl thioester, to a serine residue of a broad range of acceptors including the acyl carrier domain of FASN. The chain is L-aminoadipate-semialdehyde dehydrogenase-phosphopantetheinyl transferase (AASDHPPT) from Pongo abelii (Sumatran orangutan).